We begin with the raw amino-acid sequence, 356 residues long: S-adenosylmethionine:tRNA ribosyltransferase-isomerase (356 aa).

This sequence belongs to the QueA family. In terms of assembly, monomer.

The protein localises to the cytoplasm. It carries out the reaction 7-aminomethyl-7-carbaguanosine(34) in tRNA + S-adenosyl-L-methionine = epoxyqueuosine(34) in tRNA + adenine + L-methionine + 2 H(+). The protein operates within tRNA modification; tRNA-queuosine biosynthesis. Functionally, transfers and isomerizes the ribose moiety from AdoMet to the 7-aminomethyl group of 7-deazaguanine (preQ1-tRNA) to give epoxyqueuosine (oQ-tRNA). This is S-adenosylmethionine:tRNA ribosyltransferase-isomerase from Xanthomonas euvesicatoria pv. vesicatoria (strain 85-10) (Xanthomonas campestris pv. vesicatoria).